The chain runs to 299 residues: Fibrinogen silencer-binding protein (299 aa).

A Glycyl lysine isopeptide (Lys-Gly) (interchain with G-Cter in SUMO2) cross-link involves residue Lys94.

In terms of assembly, interacts with APBA1 (via PDZ 1 and 2 domains). In terms of tissue distribution, expressed in multiple tissues including brain.

It is found in the nucleus. Transcriptional repressor that down-regulates the expression of the fibrinogen gamma chain. Represses transcription of GSK3B gene promoter via its interaction with APBA1. This Homo sapiens (Human) protein is Fibrinogen silencer-binding protein (FSBP).